Here is a 368-residue protein sequence, read N- to C-terminus: Phosphate acyltransferase (368 aa).

Residues 334–368 form a disordered region; it reads EGSLEQAARDASGAGHASPIAGQPAEPYAAQSSKA.

Belongs to the PlsX family. As to quaternary structure, homodimer. Probably interacts with PlsY.

The protein localises to the cytoplasm. The enzyme catalyses a fatty acyl-[ACP] + phosphate = an acyl phosphate + holo-[ACP]. Its pathway is lipid metabolism; phospholipid metabolism. Catalyzes the reversible formation of acyl-phosphate (acyl-PO(4)) from acyl-[acyl-carrier-protein] (acyl-ACP). This enzyme utilizes acyl-ACP as fatty acyl donor, but not acyl-CoA. In Paraburkholderia xenovorans (strain LB400), this protein is Phosphate acyltransferase.